A 203-amino-acid polypeptide reads, in one-letter code: High frequency lysogenization protein HflD homolog (203 aa).

This sequence belongs to the HflD family.

Its subcellular location is the cytoplasm. It localises to the cell inner membrane. The chain is High frequency lysogenization protein HflD homolog from Pasteurella multocida (strain Pm70).